The primary structure comprises 251 residues: uncharacterized protein (251 aa).

This is an uncharacterized protein from Haemophilus influenzae (strain ATCC 51907 / DSM 11121 / KW20 / Rd).